Consider the following 335-residue polypeptide: Biotin synthase (335 aa).

The Radical SAM core domain maps to 51–278 (NTVQLSSLLS…LAKVRLSAGR (228 aa)). [4Fe-4S] cluster is bound by residues C66, C70, and C73. [2Fe-2S] cluster is bound by residues C110, C141, C201, and R273.

Belongs to the radical SAM superfamily. Biotin synthase family. As to quaternary structure, homodimer. [4Fe-4S] cluster is required as a cofactor. The cofactor is [2Fe-2S] cluster.

The catalysed reaction is (4R,5S)-dethiobiotin + (sulfur carrier)-SH + 2 reduced [2Fe-2S]-[ferredoxin] + 2 S-adenosyl-L-methionine = (sulfur carrier)-H + biotin + 2 5'-deoxyadenosine + 2 L-methionine + 2 oxidized [2Fe-2S]-[ferredoxin]. It participates in cofactor biosynthesis; biotin biosynthesis; biotin from 7,8-diaminononanoate: step 2/2. Catalyzes the conversion of dethiobiotin (DTB) to biotin by the insertion of a sulfur atom into dethiobiotin via a radical-based mechanism. The chain is Biotin synthase from Bordetella bronchiseptica (strain ATCC BAA-588 / NCTC 13252 / RB50) (Alcaligenes bronchisepticus).